We begin with the raw amino-acid sequence, 488 residues long: MSFNNKTIEELHNLLVSKEISATELTQATIDDIKAREEAVNAFVTVAEEAALAQAKAIDEKGIDADNLLSGIPFAVKDNISTDGILTTAASKMLYNYEPIFDATAVANAKAKDMIVIGKTNMDEFAMGGSGETSYYGATKNAWDHSKVPGGSSSGSAAAVASGQVRLSLGSDTGGSIRQPAAFNGIVGLKPTYGTVSRFGLIAFGSSLDQIGTFSQTVKENAQLLNVIASEDAKDSTSAPVRIADFTSKIGQDIKGMKIALPKEYLGEGIDPEVKETILDAAKHFEKLGATVEEVSLPHSKYGVAVYYIIASSEASSNLQRFDGIRYGFRAEDAKNLDDIYVNTRSQGFGDEVKRRIMLGTFSLSSGYYDAYYKKAGQVRTLIIQDFEKVFADYDLILGPTAPSVAFDLDTLNHDPVAMYLADLLTIPVNLAGLPGISIPAGFAQGLPVGLQLIGPKYSEETIYQAAAAFEATTDYHKQQPVIFGGDN.

Catalysis depends on charge relay system residues Lys77 and Ser152. Residue Ser176 is the Acyl-ester intermediate of the active site.

It belongs to the amidase family. GatA subfamily. Heterotrimer of A, B and C subunits.

The enzyme catalyses L-glutamyl-tRNA(Gln) + L-glutamine + ATP + H2O = L-glutaminyl-tRNA(Gln) + L-glutamate + ADP + phosphate + H(+). In terms of biological role, allows the formation of correctly charged Gln-tRNA(Gln) through the transamidation of misacylated Glu-tRNA(Gln) in organisms which lack glutaminyl-tRNA synthetase. The reaction takes place in the presence of glutamine and ATP through an activated gamma-phospho-Glu-tRNA(Gln). This is Glutamyl-tRNA(Gln) amidotransferase subunit A from Streptococcus thermophilus (strain CNRZ 1066).